We begin with the raw amino-acid sequence, 636 residues long: DNA-directed RNA polymerase III subunit RPC3 (636 aa).

Residues 366–385 (SMQRRSQERSTHQGQSHKRL) form a disordered region. A leucine-zipper region spans residues 563–584 (LAWNIANSIHKTEILKEENFTL).

The protein belongs to the RNA polymerase beta chain family. As to quaternary structure, component of the RNA polymerase III (Pol III) complex consisting of 17 subunits.

Its subcellular location is the nucleus. DNA-dependent RNA polymerase catalyzes the transcription of DNA into RNA using the four ribonucleoside triphosphates as substrates. Specific core component of RNA polymerase III which synthesizes small RNAs, such as 5S rRNA and tRNAs. This Eremothecium gossypii (strain ATCC 10895 / CBS 109.51 / FGSC 9923 / NRRL Y-1056) (Yeast) protein is DNA-directed RNA polymerase III subunit RPC3 (RPC82).